Here is a 374-residue protein sequence, read N- to C-terminus: bZIP transcription factor TRAB1 (374 aa).

Basic and acidic residues predominate over residues 1 to 13 (MDLKDGGGSERRG). 2 disordered regions span residues 1–23 (MDLKDGGGSERRGAAAGAGAGAA) and 117–142 (ASPGAAAADGGGGGGEQQQPRRQPTL). The span at 14–23 (AAAGAGAGAA) shows a compositional bias: low complexity. The bZIP domain occupies 286-349 (VERRQRRMIK…KNFFPEMQKN (64 aa)). A basic motif region spans residues 288–307 (RRQRRMIKNRESAARSRARK). The interval 314–335 (LEAEVQKLKEQNMELQKKQEEI) is leucine-zipper.

It belongs to the bZIP family. As to quaternary structure, interacts with VP1 (via N-terminus). In terms of tissue distribution, expressed in roots, leaves and embryos.

The protein localises to the nucleus. Functionally, transcription activator that mediates abscisic acid (ABA) signaling. Binds specifically to the ABA-responsive element (ABRE) of the EMP1 and RAB16A gene promoters. The sequence is that of bZIP transcription factor TRAB1 from Oryza sativa subsp. japonica (Rice).